The primary structure comprises 720 residues: Phosphoribosylformylglycinamidine synthase subunit PurL (720 aa).

His47 is an active-site residue. ATP is bound by residues Tyr50 and Lys89. Residue Glu91 participates in Mg(2+) binding. Substrate contacts are provided by residues 92–95 and Arg114; that span reads SHNH. His93 serves as the catalytic Proton acceptor. Asp115 contacts Mg(2+). Gln238 provides a ligand contact to substrate. Asp266 contacts Mg(2+). 310-312 contacts substrate; it reads ESQ. ATP-binding residues include Asp488 and Gly525. A Mg(2+)-binding site is contributed by Asn526. Substrate is bound at residue Ser528.

Belongs to the FGAMS family. Monomer. Part of the FGAM synthase complex composed of 1 PurL, 1 PurQ and 2 PurS subunits.

It is found in the cytoplasm. It carries out the reaction N(2)-formyl-N(1)-(5-phospho-beta-D-ribosyl)glycinamide + L-glutamine + ATP + H2O = 2-formamido-N(1)-(5-O-phospho-beta-D-ribosyl)acetamidine + L-glutamate + ADP + phosphate + H(+). It functions in the pathway purine metabolism; IMP biosynthesis via de novo pathway; 5-amino-1-(5-phospho-D-ribosyl)imidazole from N(2)-formyl-N(1)-(5-phospho-D-ribosyl)glycinamide: step 1/2. Part of the phosphoribosylformylglycinamidine synthase complex involved in the purines biosynthetic pathway. Catalyzes the ATP-dependent conversion of formylglycinamide ribonucleotide (FGAR) and glutamine to yield formylglycinamidine ribonucleotide (FGAM) and glutamate. The FGAM synthase complex is composed of three subunits. PurQ produces an ammonia molecule by converting glutamine to glutamate. PurL transfers the ammonia molecule to FGAR to form FGAM in an ATP-dependent manner. PurS interacts with PurQ and PurL and is thought to assist in the transfer of the ammonia molecule from PurQ to PurL. The protein is Phosphoribosylformylglycinamidine synthase subunit PurL of Cereibacter sphaeroides (strain ATCC 17023 / DSM 158 / JCM 6121 / CCUG 31486 / LMG 2827 / NBRC 12203 / NCIMB 8253 / ATH 2.4.1.) (Rhodobacter sphaeroides).